The chain runs to 274 residues: NAD-dependent protein deacylase (274 aa).

The Deacetylase sirtuin-type domain maps to 4–274 (CLLPSSDMDA…GELLPKALAP (271 aa)). 29–48 (GAGVSAESGVPTFRGAGGLW) provides a ligand contact to NAD(+). Substrate contacts are provided by tyrosine 73 and arginine 76. Residue 111–114 (QNID) participates in NAD(+) binding. Histidine 129 (proton acceptor) is an active-site residue. Zn(2+) is bound by residues cysteine 137, cysteine 140, cysteine 178, and cysteine 183. NAD(+)-binding positions include 220 to 222 (GTS), 246 to 248 (NME), and cysteine 264.

Belongs to the sirtuin family. Class III subfamily. It depends on Zn(2+) as a cofactor.

Its subcellular location is the mitochondrion. It catalyses the reaction N(6)-malonyl-L-lysyl-[protein] + NAD(+) + H2O = 2''-O-malonyl-ADP-D-ribose + nicotinamide + L-lysyl-[protein]. It carries out the reaction N(6)-succinyl-L-lysyl-[protein] + NAD(+) + H2O = 2''-O-succinyl-ADP-D-ribose + nicotinamide + L-lysyl-[protein]. The catalysed reaction is N(6)-glutaryl-L-lysyl-[protein] + NAD(+) + H2O = 2''-O-glutaryl-ADP-D-ribose + nicotinamide + L-lysyl-[protein]. Functionally, NAD-dependent lysine demalonylase, desuccinylase and deglutarylase that specifically removes malonyl, succinyl and glutaryl groups on target proteins. Has weak NAD-dependent protein deacetylase activity; however this activity may not be physiologically relevant in vivo. The sequence is that of NAD-dependent protein deacylase from Daphnia pulex (Water flea).